A 449-amino-acid chain; its full sequence is Phosphoglucosamine mutase (449 aa).

The active-site Phosphoserine intermediate is Ser-99. Mg(2+)-binding residues include Ser-99, Asp-239, Asp-241, and Asp-243. The residue at position 99 (Ser-99) is a Phosphoserine.

The protein belongs to the phosphohexose mutase family. The cofactor is Mg(2+). In terms of processing, activated by phosphorylation.

It carries out the reaction alpha-D-glucosamine 1-phosphate = D-glucosamine 6-phosphate. Functionally, catalyzes the conversion of glucosamine-6-phosphate to glucosamine-1-phosphate. In Finegoldia magna (strain ATCC 29328 / DSM 20472 / WAL 2508) (Peptostreptococcus magnus), this protein is Phosphoglucosamine mutase.